A 331-amino-acid polypeptide reads, in one-letter code: Heat-inducible transcription repressor HrcA (331 aa).

This sequence belongs to the HrcA family.

Negative regulator of class I heat shock genes (grpE-dnaK-dnaJ and groELS operons). Prevents heat-shock induction of these operons. This is Heat-inducible transcription repressor HrcA from Synechococcus sp. (strain WH7803).